The following is an 82-amino-acid chain: Probable 26S proteasome complex subunit dss-1 (82 aa).

A disordered region spans residues 56-82 (NWDDETHESEFSKQLKEELRKSGHQVA). A compositionally biased stretch (basic and acidic residues) spans 63–76 (ESEFSKQLKEELRK).

It belongs to the DSS1/SEM1 family. In terms of assembly, part of the 26S proteasome. As to expression, expressed in intestinal epithelium and head neurons.

It localises to the nucleus. The protein localises to the cytoplasm. Functionally, subunit of the 26S proteasome which plays a role in ubiquitin-dependent proteolysis. Has an essential role in oogenesis and larval growth. Required for intestinal function and default lifespan. The polypeptide is Probable 26S proteasome complex subunit dss-1 (dss-1) (Caenorhabditis elegans).